The chain runs to 227 residues: MMAAGTALGLALWLLLPPVGVGGAGPPPIQDGEFTFLLPAGRKQCFYQSAPANASLETEYQVIGGAGLDVDFSLESPQGVLLVSESRKADGVHTVEPTEAGDYKLCFDNSFSTISEKLVFFELIFDSLQDEEEVEGWAEAVEPEEILEVKMEDIKESIETMRIRLERSIQVLTLLRAFEARDRNLQEGNLERVNFWSAVNVAVLLLVAVLQVCTLKRFFQDKRPVPM.

Positions 1-23 (MMAAGTALGLALWLLLPPVGVGG) are cleaved as a signal peptide. Over 24 to 194 (AGPPPIQDGE…LQEGNLERVN (171 aa)) the chain is Extracellular. The GOLD domain occupies 43–125 (KQCFYQSAPA…EKLVFFELIF (83 aa)). The stretch at 145-170 (EILEVKMEDIKESIETMRIRLERSIQ) forms a coiled coil. Residues 195–215 (FWSAVNVAVLLLVAVLQVCTL) traverse the membrane as a helical segment. Residues 216–227 (KRFFQDKRPVPM) lie on the Cytoplasmic side of the membrane. The COPII vesicle coat-binding motif lies at 218 to 219 (FF). Residues 218 to 227 (FFQDKRPVPM) carry the COPI vesicle coat-binding motif.

It belongs to the EMP24/GP25L family. Homodimer in endoplasmic reticulum, endoplasmic reticulum-Golgi intermediate compartment and cis-Golgi network. Interacts with IL1RL1. Interacts with RNF26; this interaction is important to modulate innate immune signaling through the cGAS-STING pathway.

The protein localises to the cell membrane. Its subcellular location is the endoplasmic reticulum membrane. The protein resides in the golgi apparatus. It is found in the cis-Golgi network membrane. It localises to the endoplasmic reticulum-Golgi intermediate compartment membrane. Functionally, potential role in vesicular protein trafficking, mainly in the early secretory pathway. May act as a cargo receptor at the lumenal side for incorporation of secretory cargo molecules into transport vesicles and may be involved in vesicle coat formation at the cytoplasmic side. Plays a positive role in IL-33-mediated IL-8 and IL-6 production by interacting with interleukin-33 receptor IL1RL1. Plays also a role in the modulation of innate immune signaling through the cGAS-STING pathway by interacting with RNF26. This chain is Transmembrane emp24 domain-containing protein 1 (TMED1), found in Bos taurus (Bovine).